We begin with the raw amino-acid sequence, 27 residues long: ALPCPYGCPLRCCHMTDGVCLRNKQGC.

3 disulfide bridges follow: Cys4–Cys13, Cys8–Cys20, and Cys12–Cys27.

As to expression, expressed by the venom duct.

Its subcellular location is the secreted. This Hastula hectica (Sea snail) protein is Augerpeptide hhe6.2.